Here is a 445-residue protein sequence, read N- to C-terminus: Glycerophosphocholine choline phosphodiesterase ENPP6 (445 aa).

The first 22 residues, 1 to 22 (MAGKLGVLLLALVLSLAQPASA), serve as a signal peptide directing secretion. Residues Asp-32, Ser-71, and Asn-92 each coordinate substrate. Residues Asp-32 and Ser-71 each coordinate Zn(2+). Residue Ser-71 is the Nucleophile of the active site. Position 71 is a phosphoserine (Ser-71). Asn-100 and Asn-118 each carry an N-linked (GlcNAc...) asparagine glycan. Cys-142 and Cys-154 form a disulfide bridge. Asp-193 lines the substrate pocket. Zn(2+) is bound by residues Asp-193, His-197, Asp-240, and His-241. His-241 provides a ligand contact to substrate. The N-linked (GlcNAc...) asparagine glycan is linked to Asn-341. Residue His-356 coordinates substrate. A Zn(2+)-binding site is contributed by His-356. N-linked (GlcNAc...) asparagine glycosylation is present at Asn-406. Residue Ser-421 is the site of GPI-anchor amidated serine attachment. Positions 422–445 (SAPGAPPCACALVTVLLVLLAILA) are cleaved as a propeptide — removed in mature form.

It belongs to the nucleotide pyrophosphatase/phosphodiesterase family. As to quaternary structure, homodimer; disulfide-linked. Homotetramer. Zn(2+) is required as a cofactor.

The protein localises to the cell membrane. It catalyses the reaction sn-glycerol 3-phosphocholine + H2O = phosphocholine + glycerol + H(+). The enzyme catalyses a 1-acyl-sn-glycero-3-phosphocholine + H2O = a 1-acyl-sn-glycerol + phosphocholine + H(+). The catalysed reaction is a 1-O-alkyl-sn-glycero-3-phosphocholine + H2O = a 1-O-alkyl-sn-glycerol + phosphocholine + H(+). It carries out the reaction 1-dodecanoyl-sn-glycero-3-phosphocholine + H2O = 1-dodecanoyl-sn-glycerol + phosphocholine + H(+). It catalyses the reaction 1-hexadecanoyl-sn-glycero-3-phosphocholine + H2O = 1-hexadecanoyl-sn-glycerol + phosphocholine + H(+). The enzyme catalyses 1-(5Z,8Z,11Z,14Z-eicosatetraenoyl)-sn-glycero-3-phosphocholine + H2O = 1-(5Z,8Z,11Z,14Z-eicosatetraenoyl)-sn-glycerol + phosphocholine + H(+). The catalysed reaction is 1-tetradecanoyl-sn-glycero-3-phosphocholine + H2O = 1-tetradecanoyl-sn-glycerol + phosphocholine + H(+). It carries out the reaction sphing-4-enine-phosphocholine + H2O = sphing-4-enine + phosphocholine + H(+). It catalyses the reaction 1-(9Z-octadecenoyl)-sn-glycero-3-phosphocholine + H2O = 1-(9Z-octadecenoyl)-sn-glycerol + phosphocholine + H(+). The enzyme catalyses 1-(9Z,12Z)-octadecadienoyl-sn-glycero-3-phosphocholine + H2O = 1-(9Z,12Z-octadecadienoyl)-sn-glycerol + phosphocholine + H(+). The catalysed reaction is glycero-2-phosphocholine + H2O = phosphocholine + glycerol + H(+). With respect to regulation, inhibited by EDTA and EGTA in vitro. Its function is as follows. Choline-specific glycerophosphodiesterase that hydrolyzes glycerophosphocholine (GPC) and lysophosphatidylcholine (LPC) and contributes to supplying choline to the cells. Has a preference for LPC with short (12:0 and 14:0) or polyunsaturated (18:2 and 20:4) fatty acids. In vitro, hydrolyzes only choline-containing lysophospholipids, such as sphingosylphosphorylcholine (SPC), platelet-activating factor (PAF) and lysoPAF, but not other lysophospholipids. This chain is Glycerophosphocholine choline phosphodiesterase ENPP6, found in Bos taurus (Bovine).